Consider the following 264-residue polypeptide: Thymidylate synthase (264 aa).

Arg-21 is a dUMP binding site. His-51 contributes to the (6R)-5,10-methylene-5,6,7,8-tetrahydrofolate binding site. DUMP is bound at residue 126–127 (RR). The active-site Nucleophile is Cys-146. DUMP-binding positions include 166 to 169 (RSVD), Asn-177, and 207 to 209 (HLY). Asp-169 serves as a coordination point for (6R)-5,10-methylene-5,6,7,8-tetrahydrofolate. (6R)-5,10-methylene-5,6,7,8-tetrahydrofolate is bound at residue Ala-263.

Belongs to the thymidylate synthase family. Bacterial-type ThyA subfamily. In terms of assembly, homodimer.

The protein localises to the cytoplasm. The catalysed reaction is dUMP + (6R)-5,10-methylene-5,6,7,8-tetrahydrofolate = 7,8-dihydrofolate + dTMP. It functions in the pathway pyrimidine metabolism; dTTP biosynthesis. In terms of biological role, catalyzes the reductive methylation of 2'-deoxyuridine-5'-monophosphate (dUMP) to 2'-deoxythymidine-5'-monophosphate (dTMP) while utilizing 5,10-methylenetetrahydrofolate (mTHF) as the methyl donor and reductant in the reaction, yielding dihydrofolate (DHF) as a by-product. This enzymatic reaction provides an intracellular de novo source of dTMP, an essential precursor for DNA biosynthesis. This chain is Thymidylate synthase, found in Geobacillus thermodenitrificans (strain NG80-2).